The following is a 711-amino-acid chain: Catalase HPII (711 aa).

The segment covering 1 to 10 (MPSKKTDAPK) has biased composition (basic and acidic residues). The interval 1-27 (MPSKKTDAPKQSEAAGTQTPDRANTNA) is disordered. The segment covering 14-27 (AAGTQTPDRANTNA) has biased composition (polar residues). Catalysis depends on residues His92 and Asn165. Residue Tyr379 coordinates heme.

Belongs to the catalase family. HPII subfamily. The cofactor is heme.

Its subcellular location is the cytoplasm. It catalyses the reaction 2 H2O2 = O2 + 2 H2O. In terms of biological role, decomposes hydrogen peroxide into water and oxygen; serves to protect cells from the toxic effects of hydrogen peroxide. This Pseudomonas putida (Arthrobacter siderocapsulatus) protein is Catalase HPII (katE).